The following is a 285-amino-acid chain: 2-dehydro-3-deoxyphosphooctonate aldolase (285 aa).

Belongs to the KdsA family.

The protein localises to the cytoplasm. It carries out the reaction D-arabinose 5-phosphate + phosphoenolpyruvate + H2O = 3-deoxy-alpha-D-manno-2-octulosonate-8-phosphate + phosphate. The protein operates within carbohydrate biosynthesis; 3-deoxy-D-manno-octulosonate biosynthesis; 3-deoxy-D-manno-octulosonate from D-ribulose 5-phosphate: step 2/3. It functions in the pathway bacterial outer membrane biogenesis; lipopolysaccharide biosynthesis. In Acinetobacter baylyi (strain ATCC 33305 / BD413 / ADP1), this protein is 2-dehydro-3-deoxyphosphooctonate aldolase.